The following is a 190-amino-acid chain: Zinc finger C2H2 protein ECU03_0790 (190 aa).

C2H2-type zinc fingers lie at residues 4–27, 33–55, 85–108, and 119–142; these read RCCF…LNTH, YKCD…KKKH, YKCG…ESHH, and HVCE…RSVH.

The chain is Zinc finger C2H2 protein ECU03_0790 from Encephalitozoon cuniculi (strain GB-M1) (Microsporidian parasite).